Here is a 415-residue protein sequence, read N- to C-terminus: G patch domain-containing protein 4 (415 aa).

M1 carries the post-translational modification N-acetylmethionine. At T4 the chain carries Phosphothreonine. The 47-residue stretch at 11–57 (GMKFAEEQLLKHGWTQGKGLGRRENGITQALKVTLKQDNHGVGHDPA) folds into the G-patch domain. K46 participates in a covalent cross-link: Glycyl lysine isopeptide (Lys-Gly) (interchain with G-Cter in SUMO2). Residue T116 is modified to Phosphothreonine. 2 disordered regions span residues 116–141 (TSGE…TPPK) and 191–415 (LGTS…VDLS). Positions 118-141 (GEEKPDRDLGNCSDVDNHEPTPPK) are enriched in basic and acidic residues. S130 carries the post-translational modification Phosphoserine. Positions 191–201 (LGTSQPLTDSE) are enriched in polar residues. A compositionally biased stretch (basic and acidic residues) spans 224–239 (SLGDELLGHTDRSFRD). S258 bears the Phosphoserine mark. A compositionally biased stretch (acidic residues) spans 335–345 (EDLDTQEEEGK). Positions 353–364 (RKVRRKDKRKRQ) are enriched in basic residues. The span at 387–397 (AGERSRQYPKE) shows a compositional bias: basic and acidic residues. The span at 398–407 (RAKKKKRKRD) shows a compositional bias: basic residues.

The polypeptide is G patch domain-containing protein 4 (Gpatch4) (Mus musculus (Mouse)).